The chain runs to 2944 residues: Collagen alpha-1(VII) chain (2944 aa).

A signal peptide spans 1–24; that stretch reads MRLRLLVAALCAAEILMGAPEVWA. Residues 18–1254 form a nonhelical region (NC1) region; it reads GAPEVWAQPR…TGPCAVHCPK (1237 aa). The 174-residue stretch at 39–212 folds into the VWFA 1 domain; it reads DIVFLLDGSS…SILRTLLPLI (174 aa). 9 consecutive Fibronectin type-III domains span residues 235-330, 331-417, 418-508, 511-598, 601-688, 689-776, 779-867, 870-957, and 959-1053; these read GPRD…TAKE, GLEL…TASS, VEQT…LEQL, PVMN…DPEA, VVPG…DPLG, PVRR…APEP, SVSK…PPAT, LLET…EPSH, and PSTE…SHGP. The N-linked (GlcNAc...) asparagine glycan is linked to Asn-338. N-linked (GlcNAc...) asparagine glycosylation is present at Asn-787. Residues 1055 to 1230 enclose the VWFA 2 domain; the sequence is DVVFLLHATR…PGLDRAVSDL (176 aa). N-linked (GlcNAc...) asparagine glycosylation is present at Asn-1110. Positions 1171-1173 match the Cell attachment site motif; sequence RGD. Positions 1255 to 1475 are interrupted collagenous region; the sequence is GQKGEPGVTG…GLRGAPGMTG (221 aa). The segment at 1255–2775 is triple-helical region; sequence GQKGEPGVTG…GPRGEKGEAA (1521 aa). Disordered stretches follow at residues 1259–1934 and 1960–2773; these read EPGV…GSLP and SSGS…EKGE. Residues 1338 to 1352 show a composition bias toward low complexity; sequence RGPQGPKGEPGEPGQ. A compositionally biased stretch (gly residues) spans 1353 to 1363; sequence ITGGGGPGFPG. Basic and acidic residues-rich tracts occupy residues 1397–1406 and 1439–1448; these read KGDKGDRGER and PGEKGEKGDC. The span at 1507-1518 shows a compositional bias: low complexity; that stretch reads PGAAGHPGVEGP. 3 stretches are compositionally biased toward basic and acidic residues: residues 1527-1536, 1627-1639, and 1666-1680; these read RRGEKGEPGR, RGRD…KGDE, and VGEK…EDGR. Positions 1813-1822 are enriched in pro residues; it reads PPGPPGPPGV. 3 stretches are compositionally biased toward basic and acidic residues: residues 1846 to 1855, 1862 to 1871, and 1968 to 1984; these read EDGRKGEKGD, EGPDGPKGER, and PERR…RGPP. The short motif at 2002 to 2004 is the Cell attachment site element; the sequence is RGD. Positions 2040–2049 are enriched in gly residues; it reads GRAGGSGEAG. The span at 2050–2068 shows a compositional bias: basic and acidic residues; it reads RPGERGERGEKGERGDQGR. The Cell attachment site signature appears at 2063 to 2065; it reads RGD. Residues 2074–2083 are compositionally biased toward pro residues; the sequence is LPGPPGPPGP. Basic and acidic residues predominate over residues 2130-2140; that stretch reads DVGEPGKRGHD. 4 positions are modified to 4-hydroxyproline: Pro-2158, Pro-2167, Pro-2176, and Pro-2179. 4 stretches are compositionally biased toward low complexity: residues 2182–2197, 2226–2241, 2279–2299, and 2306–2317; these read PGLA…SGLK, SGLV…PGQV, PKGE…PPGA, and PGDLAGALLGEP. The span at 2319 to 2335 shows a compositional bias: basic and acidic residues; it reads AKGDRGLPGPRGEKGEA. Residues 2414–2427 are compositionally biased toward low complexity; sequence ERGLAGPPGREGAP. Basic and acidic residues-rich tracts occupy residues 2462 to 2477 and 2525 to 2544; these read RGER…DGHP and AKGD…KGPR. Low complexity predominate over residues 2576–2594; that stretch reads PKGEPGAAGIPGEPGAPGK. The Cell attachment site signature appears at 2601–2603; the sequence is RGD. A compositionally biased stretch (basic and acidic residues) spans 2615-2636; that stretch reads LKGEKGIKGTCGRDGERGDKGE. Residues Lys-2616 and Lys-2622 each carry the 5-hydroxylysine modification. The Cell attachment site motif lies at 2631 to 2633; sequence RGD. 4-hydroxyproline is present on residues Pro-2655, Pro-2658, and Pro-2664. A compositionally biased stretch (gly residues) spans 2695 to 2704; the sequence is GPPGVGGFPG. Residues 2776 to 2944 form a nonhelical region (NC2) region; sequence LTEDDIRDFV…GVHSQKTGAA (169 aa). Residues 2879 to 2931 enclose the BPTI/Kunitz inhibitor domain; the sequence is CSLPLDEGSCTAYTLRWYHRAVPGGTACHPFVYGGCGGNANRFGTREACERRC. 3 disulfides stabilise this stretch: Cys-2879–Cys-2931, Cys-2888–Cys-2914, and Cys-2906–Cys-2927.

As to quaternary structure, homotrimer. Interacts with MIA3/TANGO1; facilitating its loading into transport carriers and subsequent secretion. In terms of processing, prolines at the third position of the tripeptide repeating unit (G-X-Y) are hydroxylated in some or all of the chains.

The protein localises to the secreted. It is found in the extracellular space. Its subcellular location is the extracellular matrix. It localises to the basement membrane. Stratified squamous epithelial basement membrane protein that forms anchoring fibrils which may contribute to epithelial basement membrane organization and adherence by interacting with extracellular matrix (ECM) proteins such as type IV collagen. The protein is Collagen alpha-1(VII) chain of Mus musculus (Mouse).